Consider the following 324-residue polypeptide: Beta-ketoacyl-[acyl-carrier-protein] synthase III (324 aa).

Residues Cys114 and His251 contribute to the active site. The tract at residues 252 to 256 (QANRR) is ACP-binding. The active site involves Asn281.

It belongs to the thiolase-like superfamily. FabH family. As to quaternary structure, homodimer.

It localises to the cytoplasm. It catalyses the reaction malonyl-[ACP] + acetyl-CoA + H(+) = 3-oxobutanoyl-[ACP] + CO2 + CoA. Its pathway is lipid metabolism; fatty acid biosynthesis. In terms of biological role, catalyzes the condensation reaction of fatty acid synthesis by the addition to an acyl acceptor of two carbons from malonyl-ACP. Catalyzes the first condensation reaction which initiates fatty acid synthesis and may therefore play a role in governing the total rate of fatty acid production. Possesses both acetoacetyl-ACP synthase and acetyl transacylase activities. Its substrate specificity determines the biosynthesis of branched-chain and/or straight-chain of fatty acids. The protein is Beta-ketoacyl-[acyl-carrier-protein] synthase III of Paramagnetospirillum magneticum (strain ATCC 700264 / AMB-1) (Magnetospirillum magneticum).